A 307-amino-acid chain; its full sequence is Myeloid-associated differentiation marker-like protein 2 (307 aa).

MARVEL domains are found at residues 17–154 (AVTS…ARPG) and 159–303 (YMAT…RIRF). 7 consecutive transmembrane segments (helical) span residues 53 to 73 (FCMA…ACEF), 90 to 110 (AFAM…PLYF), 129 to 149 (LAAS…VALT), 163 to 183 (VSGL…GALV), 198 to 218 (VAVY…SVMG), 232 to 252 (VVYT…WPVF), and 278 to 298 (LVVA…LAYS).

This sequence belongs to the MAL family.

The protein localises to the membrane. The polypeptide is Myeloid-associated differentiation marker-like protein 2 (Myadml2) (Rattus norvegicus (Rat)).